The chain runs to 161 residues: Cytochrome c-type biogenesis protein CcmE (161 aa).

The Cytoplasmic portion of the chain corresponds to 1–8 (MNPVRKKR). A helical; Signal-anchor for type II membrane protein transmembrane segment spans residues 9–29 (LYIVLAILCGVSIAVALALTA). At 30 to 161 (LQENINLFYT…AKGYQQESAQ (132 aa)) the chain is on the periplasmic side. Heme contacts are provided by His124 and Tyr128.

Belongs to the CcmE/CycJ family.

The protein resides in the cell inner membrane. Its function is as follows. Heme chaperone required for the biogenesis of c-type cytochromes. Transiently binds heme delivered by CcmC and transfers the heme to apo-cytochromes in a process facilitated by CcmF and CcmH. In Ectopseudomonas mendocina (strain ymp) (Pseudomonas mendocina), this protein is Cytochrome c-type biogenesis protein CcmE.